The sequence spans 215 residues: Riboflavin synthase (215 aa).

Lumazine-binding repeat units follow at residues 1–96 and 97–193; these read MFTG…FGGH and IVSG…EQFL. 2,4-dihydroxypteridine is bound by residues 4-6, 47-49, 61-66, 100-102, K135, 144-146, and 158-163; these read GII, CLT, DVMSET, GHI, SLT, and SIIPHT.

As to quaternary structure, homotrimer.

It carries out the reaction 2 6,7-dimethyl-8-(1-D-ribityl)lumazine + H(+) = 5-amino-6-(D-ribitylamino)uracil + riboflavin. It participates in cofactor biosynthesis; riboflavin biosynthesis; riboflavin from 2-hydroxy-3-oxobutyl phosphate and 5-amino-6-(D-ribitylamino)uracil: step 2/2. Catalyzes the dismutation of two molecules of 6,7-dimethyl-8-ribityllumazine, resulting in the formation of riboflavin and 5-amino-6-(D-ribitylamino)uracil. This Actinobacillus pleuropneumoniae (Haemophilus pleuropneumoniae) protein is Riboflavin synthase (ribE).